The following is a 187-amino-acid chain: UPF0301 protein YqgE (187 aa).

Belongs to the UPF0301 (AlgH) family.

The chain is UPF0301 protein YqgE from Escherichia coli O127:H6 (strain E2348/69 / EPEC).